The primary structure comprises 139 residues: DNA-directed RNA polymerase II subunit Rpb4 (139 aa).

It belongs to the eukaryotic RPB4 RNA polymerase subunit family. In terms of assembly, RNA polymerase II consists of 12 different subunits.

The protein resides in the nucleus. The protein localises to the chromosome. In terms of biological role, DNA-dependent RNA polymerase catalyzes the transcription of DNA into RNA using the four ribonucleoside triphosphates as substrates. Associates with POLR2G. The sequence is that of DNA-directed RNA polymerase II subunit Rpb4 from Drosophila melanogaster (Fruit fly).